Reading from the N-terminus, the 637-residue chain is 1-deoxy-D-xylulose-5-phosphate synthase (637 aa).

Thiamine diphosphate is bound by residues His-72 and 113–115; that span reads GHA. Asp-144 contributes to the Mg(2+) binding site. Residues 145 to 146, Asn-174, Tyr-287, and Glu-370 contribute to the thiamine diphosphate site; that span reads GA. Asn-174 lines the Mg(2+) pocket.

This sequence belongs to the transketolase family. DXPS subfamily. As to quaternary structure, homodimer. The cofactor is Mg(2+). Thiamine diphosphate is required as a cofactor.

It carries out the reaction D-glyceraldehyde 3-phosphate + pyruvate + H(+) = 1-deoxy-D-xylulose 5-phosphate + CO2. It participates in metabolic intermediate biosynthesis; 1-deoxy-D-xylulose 5-phosphate biosynthesis; 1-deoxy-D-xylulose 5-phosphate from D-glyceraldehyde 3-phosphate and pyruvate: step 1/1. Its function is as follows. Catalyzes the acyloin condensation reaction between C atoms 2 and 3 of pyruvate and glyceraldehyde 3-phosphate to yield 1-deoxy-D-xylulose-5-phosphate (DXP). The protein is 1-deoxy-D-xylulose-5-phosphate synthase of Prochlorococcus marinus subsp. pastoris (strain CCMP1986 / NIES-2087 / MED4).